The following is a 1108-amino-acid chain: Probable E3 ubiquitin ligase SUD1 (1108 aa).

Positions 1 to 60 (MEISPADSLSISGAAASEVVSEPSVSSSSSSSSPNQASPNPFSNMDPAVSTATGSRYVDD) are disordered. Residues 10–44 (SISGAAASEVVSEPSVSSSSSSSSPNQASPNPFSN) are compositionally biased toward low complexity. The RING-CH-type zinc finger occupies 60 to 121 (DDEDEEDVCR…EVCKHPFSFS (62 aa)). Positions 68, 71, 85, 87, 95, 98, 111, and 114 each coordinate Zn(2+). The next 2 membrane-spanning stretches (helical) occupy residues 157–177 (FVLS…WRLA) and 197–217 (VILT…FIFL). Residues 237-246 (ERDDDVDRNG) are compositionally biased toward basic and acidic residues. A disordered region spans residues 237–273 (ERDDDVDRNGARAARRPAGQANRNLAGEGNGEDAGDQ). Residues 286 to 308 (ENVLARLDIQAARLEAQVEQMFD) adopt a coiled-coil conformation. The next 8 helical transmembrane spans lie at 339–359 (FTVL…PFTL), 362–382 (IILY…VAAS), 462–482 (AVGY…IALI), 489–509 (PLTV…PSLL), 525–545 (VAFL…WWLD), 572–592 (LVHW…VSLL), 630–650 (VLLS…LPVK), and 669–689 (PFTE…FIIE). A disordered region spans residues 762-784 (PNRSRLRAGNVNTGEEYEDDDEQ). A run of 6 helical transmembrane segments spans residues 796-816 (IILL…ALIV), 844-864 (YAFV…RYAI), 894-914 (AIWV…LVIV), 923-943 (SPVF…KIWT), 982-1002 (EIVF…YVLA), and 1017-1036 (SAVY…FCFC).

As to expression, expressed in cotyledons, leaves, roots, stems, inflorescences and siliques. Expression higher at the top than at the base of the stem.

It is found in the membrane. It catalyses the reaction S-ubiquitinyl-[E2 ubiquitin-conjugating enzyme]-L-cysteine + [acceptor protein]-L-lysine = [E2 ubiquitin-conjugating enzyme]-L-cysteine + N(6)-ubiquitinyl-[acceptor protein]-L-lysine.. The protein operates within protein modification; protein ubiquitination. Its function is as follows. Probable E3 ubiquitin ligase acting as a positive post-transcriptional regulator of 3-hydroxy-3-methylglutaryl-coenzyme A reductase activity. Might be involved in the quality control that degrades misfolded proteins. In Arabidopsis thaliana (Mouse-ear cress), this protein is Probable E3 ubiquitin ligase SUD1 (SUD1).